The primary structure comprises 335 residues: Zinc finger protein CO3 (335 aa).

Residues Cys-15, Cys-18, Cys-38, and His-43 each contribute to the Zn(2+) site. The segment at 15–57 (CDSCRSAPCAFYCLADSAALCATCDADVHSVNPLARRHRRVPM) adopts a B box-type; atypical zinc-finger fold. The segment at 141 to 179 (AGEKEDASSSKDCSSSHGKSSEGSHEFAVPGEPVPERQG) is disordered. The region spanning 268–310 (REARVHRYREKRKTRRFEKTIRYASRKAYAETRPRIKGRFAKR) is the CCT domain.

Belongs to the CONSTANS family.

The protein resides in the nucleus. Functionally, probable transcription factor involved in the regulation of flowering time under short day (SD) conditions. Functions as a repressor of flowering under SD conditions, independently of HD1, EHD1, MADS50 and MADS51. Controls flowering time under SD conditions by negatively regulating the expression of HD3A and FTL. In Oryza sativa subsp. japonica (Rice), this protein is Zinc finger protein CO3.